A 396-amino-acid chain; its full sequence is Ribosomal RNA large subunit methyltransferase I (396 aa).

The region spanning 2-81 (TVSIYLAKGR…EAIDKDFFVR (80 aa)) is the PUA domain.

The protein belongs to the methyltransferase superfamily. RlmI family.

The protein localises to the cytoplasm. The catalysed reaction is cytidine(1962) in 23S rRNA + S-adenosyl-L-methionine = 5-methylcytidine(1962) in 23S rRNA + S-adenosyl-L-homocysteine + H(+). In terms of biological role, specifically methylates the cytosine at position 1962 (m5C1962) of 23S rRNA. The sequence is that of Ribosomal RNA large subunit methyltransferase I from Aliivibrio fischeri (strain ATCC 700601 / ES114) (Vibrio fischeri).